Here is a 1366-residue protein sequence, read N- to C-terminus: DNA-directed RNA polymerase subunit beta' (1366 aa).

Over residues 1–20 the composition is skewed to basic residues; the sequence is MTSSKPKKTSRVRKTTKNSK. A disordered region spans residues 1–37; sequence MTSSKPKKTSRVRKTTKNSKKNNPVTMPVLPKTPPSF. Zn(2+) is bound by residues Cys248, Cys315, Cys322, and Cys325. A disordered region spans residues 1292 to 1366; sequence TVDMPQSPAV…LQEEGLLSDE (75 aa). The span at 1354–1366 shows a compositional bias: low complexity; the sequence is LEGLQEEGLLSDE.

It belongs to the RNA polymerase beta' chain family. RpoC2 subfamily. In cyanobacteria the RNAP catalytic core is composed of 2 alpha, 1 beta, 1 beta', 1 gamma and 1 omega subunit. When a sigma factor is associated with the core the holoenzyme is formed, which can initiate transcription. Zn(2+) is required as a cofactor.

The catalysed reaction is RNA(n) + a ribonucleoside 5'-triphosphate = RNA(n+1) + diphosphate. In terms of biological role, DNA-dependent RNA polymerase catalyzes the transcription of DNA into RNA using the four ribonucleoside triphosphates as substrates. This chain is DNA-directed RNA polymerase subunit beta', found in Prochlorococcus marinus (strain MIT 9215).